We begin with the raw amino-acid sequence, 801 residues long: Glycerol-3-phosphate acyltransferase 2, mitochondrial (801 aa).

The interval Met-1–Leu-24 is disordered. Topologically, residues Met-1–Gln-305 are cytoplasmic. The segment at Gln-180–Glu-290 is acyltransferase. The HXXXXD motif signature appears at His-205–Asp-210. Residues Ala-306–Tyr-332 traverse the membrane as a helical segment. At Asp-333–His-449 the chain is on the mitochondrial intermembrane side. A helical membrane pass occupies residues Val-450 to Leu-472. At Lys-473–Ser-801 the chain is on the cytoplasmic side. At Ser-662 the chain carries Phosphoserine. A Phosphothreonine modification is found at Thr-666. Phosphoserine is present on residues Ser-668 and Ser-670.

This sequence belongs to the GPAT/DAPAT family. As to quaternary structure, interacts with PIWIL2. Highly expressed in the testis. Expressed at lower levels in the heart, liver, kidney, spleen and adipose cells. Only detected in primary spermatocytes.

Its subcellular location is the mitochondrion outer membrane. The catalysed reaction is sn-glycerol 3-phosphate + an acyl-CoA = a 1-acyl-sn-glycero-3-phosphate + CoA. It catalyses the reaction a 1-acyl-sn-glycero-3-phosphate + an acyl-CoA = a 1,2-diacyl-sn-glycero-3-phosphate + CoA. It carries out the reaction 1-(9Z-octadecenoyl)-sn-glycero-3-phosphate + (9Z)-octadecenoyl-CoA = 1,2-di-(9Z-octadecenoyl)-sn-glycero-3-phosphate + CoA. The enzyme catalyses 1-(9Z-octadecenoyl)-sn-glycero-3-phosphate + (5Z,8Z,11Z,14Z)-eicosatetraenoyl-CoA = 1-(9Z)-octadecenoyl-2-(5Z,8Z,11Z,14Z)-eicosatetraenoyl-sn-glycero-3-phosphate + CoA. The catalysed reaction is (5Z,8Z,11Z,14Z)-eicosatetraenoyl-CoA + sn-glycerol 3-phosphate = 1-(5Z,8Z,11Z,14Z-eicosatetraenoyl)-sn-glycero-3-phosphate + CoA. It functions in the pathway phospholipid metabolism; CDP-diacylglycerol biosynthesis; CDP-diacylglycerol from sn-glycerol 3-phosphate: step 1/3. Inhibited by N-ethylmaleimide (NEM). Its function is as follows. Transfers an acyl-group from acyl-ACP to the sn-1 position of glycerol-3-phosphate producing a lysophosphatidic acid (LPA), an essential step for the triacylglycerol (TAG) and glycerophospholipids. In vitro also transfers an acyl-group from acyl-ACP to the LPA producing a phosphatidic acid (PA). Prefers arachidonoyl-CoA as the acyl donor. Required for primary processing step during piRNA biosynthesis. Molecular mechanisms by which it promotes piRNA biosynthesis are unclear and do not involve its acyltransferase activity. The protein is Glycerol-3-phosphate acyltransferase 2, mitochondrial of Mus musculus (Mouse).